Reading from the N-terminus, the 311-residue chain is Methionyl-tRNA formyltransferase (311 aa).

110–113 is a binding site for (6S)-5,6,7,8-tetrahydrofolate; it reads SLLP.

The protein belongs to the Fmt family.

The catalysed reaction is L-methionyl-tRNA(fMet) + (6R)-10-formyltetrahydrofolate = N-formyl-L-methionyl-tRNA(fMet) + (6S)-5,6,7,8-tetrahydrofolate + H(+). In terms of biological role, attaches a formyl group to the free amino group of methionyl-tRNA(fMet). The formyl group appears to play a dual role in the initiator identity of N-formylmethionyl-tRNA by promoting its recognition by IF2 and preventing the misappropriation of this tRNA by the elongation apparatus. In Acidobacterium capsulatum (strain ATCC 51196 / DSM 11244 / BCRC 80197 / JCM 7670 / NBRC 15755 / NCIMB 13165 / 161), this protein is Methionyl-tRNA formyltransferase.